Consider the following 356-residue polypeptide: Peptide chain release factor 1 (356 aa).

Q233 is modified (N5-methylglutamine).

Belongs to the prokaryotic/mitochondrial release factor family. In terms of processing, methylated by PrmC. Methylation increases the termination efficiency of RF1.

The protein resides in the cytoplasm. Peptide chain release factor 1 directs the termination of translation in response to the peptide chain termination codons UAG and UAA. This chain is Peptide chain release factor 1, found in Halalkalibacterium halodurans (strain ATCC BAA-125 / DSM 18197 / FERM 7344 / JCM 9153 / C-125) (Bacillus halodurans).